We begin with the raw amino-acid sequence, 94 residues long: Large ribosomal subunit protein uL23 (94 aa).

The protein belongs to the universal ribosomal protein uL23 family. In terms of assembly, part of the 50S ribosomal subunit. Contacts protein L29, and trigger factor when it is bound to the ribosome.

One of the early assembly proteins it binds 23S rRNA. One of the proteins that surrounds the polypeptide exit tunnel on the outside of the ribosome. Forms the main docking site for trigger factor binding to the ribosome. This is Large ribosomal subunit protein uL23 from Pelobacter propionicus (strain DSM 2379 / NBRC 103807 / OttBd1).